The following is a 371-amino-acid chain: S-adenosylmethionine:tRNA ribosyltransferase-isomerase (371 aa).

This sequence belongs to the QueA family. Monomer.

It is found in the cytoplasm. It catalyses the reaction 7-aminomethyl-7-carbaguanosine(34) in tRNA + S-adenosyl-L-methionine = epoxyqueuosine(34) in tRNA + adenine + L-methionine + 2 H(+). The protein operates within tRNA modification; tRNA-queuosine biosynthesis. Functionally, transfers and isomerizes the ribose moiety from AdoMet to the 7-aminomethyl group of 7-deazaguanine (preQ1-tRNA) to give epoxyqueuosine (oQ-tRNA). The chain is S-adenosylmethionine:tRNA ribosyltransferase-isomerase from Nitratidesulfovibrio vulgaris (strain DP4) (Desulfovibrio vulgaris).